A 193-amino-acid chain; its full sequence is ATP-dependent Clp protease proteolytic subunit (193 aa).

Serine 98 serves as the catalytic Nucleophile. The active site involves histidine 123.

This sequence belongs to the peptidase S14 family. Fourteen ClpP subunits assemble into 2 heptameric rings which stack back to back to give a disk-like structure with a central cavity, resembling the structure of eukaryotic proteasomes.

It localises to the cytoplasm. The catalysed reaction is Hydrolysis of proteins to small peptides in the presence of ATP and magnesium. alpha-casein is the usual test substrate. In the absence of ATP, only oligopeptides shorter than five residues are hydrolyzed (such as succinyl-Leu-Tyr-|-NHMec, and Leu-Tyr-Leu-|-Tyr-Trp, in which cleavage of the -Tyr-|-Leu- and -Tyr-|-Trp bonds also occurs).. Its function is as follows. Cleaves peptides in various proteins in a process that requires ATP hydrolysis. Has a chymotrypsin-like activity. Plays a major role in the degradation of misfolded proteins. The sequence is that of ATP-dependent Clp protease proteolytic subunit from Pasteurella multocida (strain Pm70).